Here is a 371-residue protein sequence, read N- to C-terminus: Peptidyl-prolyl cis-trans isomerase CPR6 (371 aa).

The PPIase cyclophilin-type domain maps to 7 to 174; it reads FFDISIGGKP…RDVKIDDCGV (168 aa). 3 TPR repeats span residues 219–252, 270–303, and 308–341; these read IETV…LKEY, VSIP…EAAD, and AKAL…QPND.

The protein belongs to the cyclophilin-type PPIase family. PPIase D subfamily. In terms of assembly, interacts with RPD3.

The protein resides in the cytoplasm. The enzyme catalyses [protein]-peptidylproline (omega=180) = [protein]-peptidylproline (omega=0). In terms of biological role, PPIases accelerate the folding of proteins. It catalyzes the cis-trans isomerization of proline imidic peptide bonds in oligopeptides. This Saccharomyces cerevisiae (strain ATCC 204508 / S288c) (Baker's yeast) protein is Peptidyl-prolyl cis-trans isomerase CPR6 (CPR6).